We begin with the raw amino-acid sequence, 177 residues long: R-phycoerythrin beta chain (177 aa).

(2R,3E)-phycoerythrobilin is bound by residues Asn-35 and Asp-39. Cys-50, Asp-54, and Cys-61 together coordinate phycourobilin. (2R,3E)-phycoerythrobilin contacts are provided by residues Asn-72, 77 to 78, Cys-82, and 84 to 85; these read RR and RD. Residue Asn-72 is modified to N4-methylasparagine. 147–148 serves as a coordination point for phycourobilin; sequence SQ. (2R,3E)-phycoerythrobilin contacts are provided by Ile-154 and Cys-158.

The protein belongs to the phycobiliprotein family. As to quaternary structure, heterododecamer of 6 alpha and 6 beta chains. The basic functional unit of phycobiliproteins is a ring-shaped hexamer formed from two back-to-back trimers contacting via the alpha chain subunits. The trimers are composed of alpha/beta subunit heterodimers arranged around a three-fold axis of symmetry. The phycoerythrins also contain a gamma subunit which is located in the center of the hexamer. Post-translationally, contains two covalently linked phycoerythrobilin chromophores and one covalently linked phycourobilin chromophore.

Its subcellular location is the plastid. It localises to the chloroplast thylakoid membrane. Light-harvesting photosynthetic tetrapyrrole chromophore-protein from the phycobiliprotein complex. The polypeptide is R-phycoerythrin beta chain (rpeB) (Agarophyton chilense (Red seaweed)).